The following is a 410-amino-acid chain: 3-phosphoshikimate 1-carboxyvinyltransferase (410 aa).

3-phosphoshikimate is bound by residues lysine 21, serine 22, and arginine 26. Lysine 21 contacts phosphoenolpyruvate. Phosphoenolpyruvate contacts are provided by glycine 69 and arginine 97. Residues serine 143, serine 144, glutamine 145, serine 171, aspartate 288, and lysine 315 each coordinate 3-phosphoshikimate. Residue glutamine 145 participates in phosphoenolpyruvate binding. The active-site Proton acceptor is aspartate 288. Residues arginine 319, arginine 364, and lysine 389 each coordinate phosphoenolpyruvate.

Belongs to the EPSP synthase family. In terms of assembly, monomer.

It is found in the cytoplasm. The enzyme catalyses 3-phosphoshikimate + phosphoenolpyruvate = 5-O-(1-carboxyvinyl)-3-phosphoshikimate + phosphate. Its pathway is metabolic intermediate biosynthesis; chorismate biosynthesis; chorismate from D-erythrose 4-phosphate and phosphoenolpyruvate: step 6/7. Functionally, catalyzes the transfer of the enolpyruvyl moiety of phosphoenolpyruvate (PEP) to the 5-hydroxyl of shikimate-3-phosphate (S3P) to produce enolpyruvyl shikimate-3-phosphate and inorganic phosphate. This Bacteroides fragilis (strain YCH46) protein is 3-phosphoshikimate 1-carboxyvinyltransferase.